The sequence spans 326 residues: AA9 family lytic polysaccharide monooxygenase B (326 aa).

Residues 1–19 (MKSFTIAALAALWAQEAAA) form the signal peptide. Residues His20 and His98 each coordinate Cu(2+). Cys57 and Cys192 are disulfide-bonded. 2 residues coordinate O2: His178 and Gln187. Tyr189 is a binding site for Cu(2+). The segment covering 265 to 281 (PSATLTQPTSTATATSA) has biased composition (low complexity). A disordered region spans residues 265–286 (PSATLTQPTSTATATSAPGGGG). In terms of domain architecture, CBM1 spans 289 to 326 (CTAAKYQQCGGTGYTGCTTCASGSTCSAVSPPYYSQCL).

The protein belongs to the polysaccharide monooxygenase AA9 family. The cofactor is Cu(2+).

Its subcellular location is the secreted. The enzyme catalyses [(1-&gt;4)-beta-D-glucosyl]n+m + reduced acceptor + O2 = 4-dehydro-beta-D-glucosyl-[(1-&gt;4)-beta-D-glucosyl]n-1 + [(1-&gt;4)-beta-D-glucosyl]m + acceptor + H2O.. Lytic polysaccharide monooxygenase (LPMO) that depolymerizes crystalline and amorphous polysaccharides via the oxidation of scissile alpha- or beta-(1-4)-glycosidic bonds, yielding C1 and C4 oxidation products. Catalysis by LPMOs requires the reduction of the active-site copper from Cu(II) to Cu(I) by a reducing agent and H(2)O(2) or O(2) as a cosubstrate. Shows no activity on wheat arabinoxylan, konjac glucomannan, acetylated spruce galactoglucomannan, or cellopentaose. The sequence is that of AA9 family lytic polysaccharide monooxygenase B from Thermothielavioides terrestris (strain ATCC 38088 / NRRL 8126) (Thielavia terrestris).